Here is a 470-residue protein sequence, read N- to C-terminus: Zinc finger protein weckle (470 aa).

A required for homodimerization region spans residues 1 to 103 (MGVPTSDWIY…DALRLEYGLP (103 aa)). A ZAD domain is found at 10 to 82 (YWCRLCARDD…SKVQAIFELL (73 aa)). 4 residues coordinate Zn(2+): C12, C15, C55, and C58. Residues 156-265 (NSDPKVLASP…LSMSPHGSQS (110 aa)) are disordered. S168 is subject to Phosphoserine. The span at 195–208 (ESDDEEAILDEDEA) shows a compositional bias: acidic residues. Positions 214-225 (LKRKRGRPKGSG) are enriched in basic residues. The segment covering 237-254 (TSREPDDNAKSKQDDKTS) has biased composition (basic and acidic residues). Polar residues predominate over residues 255-265 (ELSMSPHGSQS). 6 C2H2-type zinc fingers span residues 271 to 294 (YPCKICNETFMSFMALRRHKHDMH), 300 to 322 (YVCDHCGKGLKTFTSLVEHQLVH), 328 to 350 (CICPVCNAGFKNKARLRVHSQTH), 355 to 377 (FECNVCGKKLQTRAILNKHKYVH), 383 to 405 (FKCEVCGSGCKNSTALKIHLLGH), and 411 to 434 (YVCKYCGKAFASNTNCRSHKWKKH).

In terms of assembly, homodimer. Interacts with Myd88 and Toll.

It is found in the cell membrane. In terms of biological role, acts as an adapter to assemble/stabilize a Toll/wek/Myd88/tube complex; required for efficient recruitment of Myd88 to Toll. Dispensable for innate immune response; plays a minimal role, if any, in the immune defense against Gram-positive bacteria and fungi. Involved in dorsoventral axis determination. The sequence is that of Zinc finger protein weckle from Drosophila melanogaster (Fruit fly).